The primary structure comprises 79 residues: Conotoxin Tr6.2 (79 aa).

The signal sequence occupies residues 1–22 (MKLTCVLIISVLFLTASQLITA). Positions 23 to 47 (VYSRDKQQYRAARLRDEMRNLKGAR) are excised as a propeptide. Cystine bridges form between C49–C62, C56–C67, and C61–C77. A 4-hydroxyproline mark is found at P60 and P63.

Belongs to the conotoxin O1 superfamily. As to expression, expressed by the venom duct.

Its subcellular location is the secreted. In terms of biological role, ion channel inhibitor that inhibits the increase in intracellular calcium upon depolarization in DRG neurons. In vivo, both intraperitoneal and intracranial injections into mice induce hyperactivity. The sequence is that of Conotoxin Tr6.2 from Conus terebra (Sea snail).